Reading from the N-terminus, the 347-residue chain is MASVTSEKCVILSDGTEYDVTNYLVANKDAADLLRRYHRQEVADILNATSKSKHSEAVVEILKSAKVPLKNKEFSDLVDQNIGVGYGNEFIVKPTDLDKDFEKNHFLDLKKPLLPQILFGNIKKDVYLDQVHRPRHYRGSGSAPLFGNFLEPLTKTPWYMIPLIWVPCVTYGFLYACTGIPFSVAITFFIIGLFTWTLVEYTMHRFLFHLDEYTPDHPIFLTMHFAFHGCHHFLPADKYRLVMPPALFLIFATPWYHFIQLVLPHYIGVAGFSGAILGYVFYDLTHYFLHHRRMPNAYLTDLKTWHLDHHYKDYKSAYGITSWFWDRVFGTEGPLFNEQGKISTKAK.

The Cytoplasmic segment spans residues 1–156; it reads MASVTSEKCV…GNFLEPLTKT (156 aa). Residues 157–177 form a helical membrane-spanning segment; that stretch reads PWYMIPLIWVPCVTYGFLYAC. Thr-178 is a topological domain (lumenal). A helical membrane pass occupies residues 179–199; the sequence is GIPFSVAITFFIIGLFTWTLV. Residues 200 to 238 are Cytoplasmic-facing; it reads EYTMHRFLFHLDEYTPDHPIFLTMHFAFHGCHHFLPADK. Positions 204, 209, 228, 231, and 232 each coordinate Zn(2+). The helical transmembrane segment at 239–259 threads the bilayer; the sequence is YRLVMPPALFLIFATPWYHFI. A topological domain (lumenal) is located at residue Gln-260. Residues 261–281 traverse the membrane as a helical segment; it reads LVLPHYIGVAGFSGAILGYVF. Topologically, residues 282–347 are cytoplasmic; sequence YDLTHYFLHH…EQGKISTKAK (66 aa). Zn(2+) is bound by residues His-286, His-290, His-306, His-309, and His-310.

It belongs to the sterol desaturase family. SCS7 subfamily. The cofactor is Zn(2+).

It is found in the endoplasmic reticulum membrane. It participates in sphingolipid metabolism. Functionally, ceramide hydroxylase involved in the hydroxylation of sphingolipid-associated very long chain fatty acids. Postulated to hydroxylate the very long chain fatty acid of dihydroceramides and phytoceramides at C-2. This Schizosaccharomyces pombe (strain 972 / ATCC 24843) (Fission yeast) protein is Ceramide very long chain fatty acid hydroxylase scs7.